Reading from the N-terminus, the 371-residue chain is MEPDRQAEIAALDSALTTVERVLDVEGLRSRIEKLEHEASDPKLWDDQTRAQRVTSELSHTQGELRRVEELRRRLEDLPVLYELAAEEEGAAAGEALTEADAEFKALRADIEATEVRTLLSGEYDEREALVTIRSGAGGVDAADWAEMLMRMYVRWAEQHKYPVEVFDTSYAEEAGIKSATFAVHAPFAYGTLSVEQGTHRLVRISPFDNQSRRQTSFAEVEVLPVVETTDHIDIPEGDVRVDVYRSSGPGGQSVNTTDSAVRLTHIPTGIVVTCQNEKSQLQNKVAAMRVLQAKLLERKRIEERAELDALKGDGGSSWGNQMRSYVLHPYQMVKDLRTEYEVGNPATVLDGDIDGFLEAGIRWRNRKDDD.

Glutamine 253 carries the post-translational modification N5-methylglutamine.

It belongs to the prokaryotic/mitochondrial release factor family. In terms of processing, methylated by PrmC. Methylation increases the termination efficiency of RF2.

Its subcellular location is the cytoplasm. In terms of biological role, peptide chain release factor 2 directs the termination of translation in response to the peptide chain termination codons UGA and UAA. The protein is Peptide chain release factor 2 of Mycobacterium ulcerans (strain Agy99).